The sequence spans 351 residues: Snurportin-1 (351 aa).

2 disordered regions span residues 1–66 and 294–322; these read MESS…QKGI and EQKK…EYDS. Basic and acidic residues predominate over residues 8–42; that stretch reads LYKKGLDIGEQQKQRQKELLKQQKLRRQQEQDDYR. Basic residues predominate over residues 52–62; the sequence is PRKKSGKRSGH. Positions 274–330 form a coiled coil; that stretch reads VLQYMDAFEQKLAEHRRTLKEQKKKVNEQKEDPHTMEAEEDVESDEYDSLKRVLDQQ. The segment covering 294 to 310 has biased composition (basic and acidic residues); that stretch reads EQKKKVNEQKEDPHTME. Residues 311–320 show a composition bias toward acidic residues; that stretch reads AEEDVESDEY.

This sequence belongs to the snurportin family. Interacts with components of the snRNP complex including SmB and Smn; these interactions are RNA-dependent. Interacts with importin-7 msk but not with importin subunit beta Fs(2)Ket; the interaction is RNA-dependent.

Its subcellular location is the nucleus. It is found in the cytoplasm. It localises to the U-body. The protein localises to the nucleus speckle. The protein resides in the cajal body. Its function is as follows. Functions as an U snRNP-specific nuclear import adapter. Involved in the trimethylguanosine (m3G)-cap-dependent nuclear import of U snRNPs. Binds specifically to the terminal m3G-cap U snRNAs. In Drosophila melanogaster (Fruit fly), this protein is Snurportin-1.